Here is a 72-residue protein sequence, read N- to C-terminus: Small ribosomal subunit protein bS18c (72 aa).

It belongs to the bacterial ribosomal protein bS18 family. Part of the 30S ribosomal subunit.

The protein resides in the plastid. It localises to the chloroplast. The chain is Small ribosomal subunit protein bS18c from Phaeodactylum tricornutum (strain CCAP 1055/1).